A 173-amino-acid polypeptide reads, in one-letter code: MKRFSLAILALVVATGAQAASEKVEMNLVTSQGVGQSIGSVTITETDKGLEFSPDLKALPPGEHGFHIHAKGSCQPATKDGKASAAESAGGHLDPQNTGKHEGPEGAGHLGDLPALVVNNDGKATDAVIAPRLKSLDEIKDKALMVHVGGDNMSDQPKPLGGGGERYACGVIK.

The signal sequence occupies residues 1–19 (MKRFSLAILALVVATGAQA). Histidine 67, histidine 69, and histidine 92 together coordinate Cu cation. A disordered region spans residues 72-113 (GSCQPATKDGKASAAESAGGHLDPQNTGKHEGPEGAGHLGDL). A disulfide bridge connects residues cysteine 74 and cysteine 169. The Zn(2+) site is built by histidine 92, histidine 101, histidine 109, and aspartate 112. Histidine 147 serves as a coordination point for Cu cation.

This sequence belongs to the Cu-Zn superoxide dismutase family. In terms of assembly, monomer. Requires Cu cation as cofactor. The cofactor is Zn(2+).

Its subcellular location is the periplasm. The enzyme catalyses 2 superoxide + 2 H(+) = H2O2 + O2. Functionally, destroys radicals which are normally produced within the cells and which are toxic to biological systems. The polypeptide is Superoxide dismutase [Cu-Zn] (sodC) (Escherichia coli O157:H7).